Here is a 543-residue protein sequence, read N- to C-terminus: Probable protein kinase UbiB (543 aa).

The Protein kinase domain maps to 123–501 (DFDIVPLASA…KRQQAKGQFL (379 aa)). ATP-binding positions include 129–137 (LASASIAQV) and Lys-152. Asp-287 functions as the Proton acceptor in the catalytic mechanism. Residues 517 to 539 (TSNITALASISAATGVTFWLLSW) form a helical membrane-spanning segment.

Belongs to the ABC1 family. UbiB subfamily.

The protein localises to the cell inner membrane. It functions in the pathway cofactor biosynthesis; ubiquinone biosynthesis [regulation]. In terms of biological role, is probably a protein kinase regulator of UbiI activity which is involved in aerobic coenzyme Q (ubiquinone) biosynthesis. In Aliivibrio salmonicida (strain LFI1238) (Vibrio salmonicida (strain LFI1238)), this protein is Probable protein kinase UbiB.